Reading from the N-terminus, the 279-residue chain is Protoheme IX farnesyltransferase (279 aa).

9 helical membrane-spanning segments follow: residues 1–21 (MIKP…FFLA), 29–49 (IFFL…CILN), 79–99 (ILFF…YIYI), 101–121 (FLCT…YSYL), 128–148 (FSTF…YVAV), 156–176 (CTIL…SIII), 200–220 (IIFI…LYFF), 225–245 (FFYF…SFLS), and 254–274 (IWSR…SFLM).

This sequence belongs to the UbiA prenyltransferase family. Protoheme IX farnesyltransferase subfamily.

The protein localises to the cell membrane. The enzyme catalyses heme b + (2E,6E)-farnesyl diphosphate + H2O = Fe(II)-heme o + diphosphate. It functions in the pathway porphyrin-containing compound metabolism; heme O biosynthesis; heme O from protoheme: step 1/1. Converts heme B (protoheme IX) to heme O by substitution of the vinyl group on carbon 2 of heme B porphyrin ring with a hydroxyethyl farnesyl side group. In Buchnera aphidicola subsp. Cinara cedri (strain Cc), this protein is Protoheme IX farnesyltransferase.